A 38-amino-acid polypeptide reads, in one-letter code: Large ribosomal subunit protein bL36 (38 aa).

Belongs to the bacterial ribosomal protein bL36 family.

The protein is Large ribosomal subunit protein bL36 of Acinetobacter baylyi (strain ATCC 33305 / BD413 / ADP1).